Here is a 118-residue protein sequence, read N- to C-terminus: uncharacterized protein (118 aa).

2 helical membrane passes run 5-25 and 40-57; these read AFFN…SMVI and FLTF…QHYI.

The protein resides in the membrane. This is an uncharacterized protein from African swine fever virus (strain Badajoz 1971 Vero-adapted) (Ba71V).